Consider the following 441-residue polypeptide: D-aminoacyl-tRNA deacylase (441 aa).

Belongs to the DtdA deacylase family. As to quaternary structure, monomer. Requires Zn(2+) as cofactor.

It carries out the reaction a D-aminoacyl-tRNA + H2O = a tRNA + a D-alpha-amino acid + H(+). It catalyses the reaction glycyl-tRNA(Ala) + H2O = tRNA(Ala) + glycine + H(+). In terms of biological role, D-aminoacyl-tRNA deacylase with broad substrate specificity. By recycling D-aminoacyl-tRNA to D-amino acids and free tRNA molecules, this enzyme counteracts the toxicity associated with the formation of D-aminoacyl-tRNA entities in vivo. In Natronomonas pharaonis (strain ATCC 35678 / DSM 2160 / CIP 103997 / JCM 8858 / NBRC 14720 / NCIMB 2260 / Gabara) (Halobacterium pharaonis), this protein is D-aminoacyl-tRNA deacylase.